Reading from the N-terminus, the 130-residue chain is Small ribosomal subunit protein uS11 (130 aa).

Belongs to the universal ribosomal protein uS11 family. Part of the 30S ribosomal subunit. Interacts with proteins S7 and S18. Binds to IF-3.

Its function is as follows. Located on the platform of the 30S subunit, it bridges several disparate RNA helices of the 16S rRNA. Forms part of the Shine-Dalgarno cleft in the 70S ribosome. The sequence is that of Small ribosomal subunit protein uS11 from Prochlorococcus marinus (strain AS9601).